A 1135-amino-acid polypeptide reads, in one-letter code: Retinoblastoma-like protein 2 (1135 aa).

Positions 1 to 43 (MASGGNQSSPPPPAAAASSEEEEEDGDTADRAQPAGSPSHQIQ) are disordered. Residue serine 410 is modified to Phosphoserine. Residue threonine 414 is modified to Phosphothreonine. Residues 414–613 (TPVSTATHSL…DRIRDNENRV (200 aa)) are domain A. The pocket; binds E1A stretch occupies residues 414 to 1021 (TPVSTATHSL…QTFAMKYSQA (608 aa)). Serine 417 carries O-linked (GlcNAc) serine glycosylation. Residues 614–824 (PTCEEVTPPH…QGQPLTSSSI (211 aa)) form a spacer region. A Phosphoserine modification is found at serine 636. Position 639 is a phosphothreonine (threonine 639). Disordered regions lie at residues 649–698 (DAGG…PPQP), 806–825 (ISPGGQQQNQGQPLTSSSIR), and 932–995 (RRNS…EEEE). Positions 656 to 674 (SVTSPTTLYDRYSSPTVST) are enriched in polar residues. Phosphoserine occurs at positions 659, 669, and 684. Positions 806 to 818 (ISPGGQQQNQGQP) are enriched in low complexity. Positions 825–1021 (RPRKTSSLSL…QTFAMKYSQA (197 aa)) are domain B. Composition is skewed to polar residues over residues 935-950 (SGSCENRSHQNSPTEL) and 958-969 (DSSPVMRSNSTL). Residues serine 942, serine 946, serine 960, serine 965, and serine 967 each carry the phosphoserine modification. Position 968 is a phosphothreonine (threonine 968). The span at 971–981 (VPQPSSAPPTP) shows a compositional bias: pro residues. Phosphoserine occurs at positions 975 and 976. A Phosphothreonine modification is found at threonine 980. A phosphoserine mark is found at serine 1031, serine 1064, serine 1076, and serine 1108.

This sequence belongs to the retinoblastoma protein (RB) family. Interacts with AATF, KMT5B and KMT5C. Component of the DREAM complex (also named LINC complex) at least composed of E2F4, E2F5, LIN9, LIN37, LIN52, LIN54, MYBL1, MYBL2, RBL1, RBL2, RBBP4, TFDP1 and TFDP2. The complex exists in quiescent cells where it represses cell cycle-dependent genes. It dissociates in S phase when LIN9, LIN37, LIN52 and LIN54 form a subcomplex that binds to MYBL2. Interacts with USP4. Part of the peroxisome proliferator activated receptor alpha (PPAR-alpha) interacting complex (PRIC). Interacts with RINT1. Interacts with PML. Interacts with RBBP9. Interacts with CD53. During G0 and early G1 phase of the cell cycle, phosphorylated on Ser-636 and on 5 sites within the domain B. Phosphorylation on Ser-669 in G1 leads to its ubiquitin-dependent proteolysis.

Its subcellular location is the nucleus. Its function is as follows. Key regulator of entry into cell division. Directly involved in heterochromatin formation by maintaining overall chromatin structure and, in particular, that of constitutive heterochromatin by stabilizing histone methylation. Recruits and targets histone methyltransferases KMT5B and KMT5C, leading to epigenetic transcriptional repression. Controls histone H4 'Lys-20' trimethylation. Probably acts as a transcription repressor by recruiting chromatin-modifying enzymes to promoters. Potent inhibitor of E2F-mediated trans-activation, associates preferentially with E2F5. Binds to cyclins A and E. Binds to and may be involved in the transforming capacity of the adenovirus E1A protein. May act as a tumor suppressor. This chain is Retinoblastoma-like protein 2 (Rbl2), found in Rattus norvegicus (Rat).